A 504-amino-acid polypeptide reads, in one-letter code: O-fucosyltransferase 39 (504 aa).

The chain crosses the membrane as a helical; Signal-anchor for type II membrane protein span at residues 11–27 (WILSMFFFVVLFCNNVS). N-linked (GlcNAc...) asparagine glycosylation occurs at asparagine 115. 288 to 290 (HLR) lines the substrate pocket. Asparagine 359 and asparagine 460 each carry an N-linked (GlcNAc...) asparagine glycan.

The protein belongs to the glycosyltransferase GT106 family.

The protein localises to the membrane. It functions in the pathway glycan metabolism. The sequence is that of O-fucosyltransferase 39 from Arabidopsis thaliana (Mouse-ear cress).